The chain runs to 202 residues: HTH-type transcriptional regulator BetI 1 (202 aa).

One can recognise an HTH tetR-type domain in the interval 8–68; the sequence is PIRRRQLIQA…SAMRQILWDL (61 aa). A DNA-binding region (H-T-H motif) is located at residues 31–50; the sequence is TIARIAKRAGVSAGIISHYF.

The protein operates within amine and polyamine biosynthesis; betaine biosynthesis via choline pathway [regulation]. In terms of biological role, repressor involved in the biosynthesis of the osmoprotectant glycine betaine. It represses transcription of the choline transporter BetT and the genes of BetAB involved in the synthesis of glycine betaine. The sequence is that of HTH-type transcriptional regulator BetI 1 from Chromohalobacter salexigens (strain ATCC BAA-138 / DSM 3043 / CIP 106854 / NCIMB 13768 / 1H11).